Reading from the N-terminus, the 475-residue chain is Ankyrin repeat, SAM and basic leucine zipper domain-containing protein 1 (475 aa).

Positions 1 to 25 are disordered; the sequence is MAAGALRGLPVAGGGESSESEDDGW. Serine 17, serine 18, and serine 20 each carry phosphoserine. 6 ANK repeats span residues 45–74, 78–107, 110–144, 148–177, 181–210, and 214–243; these read EKKE…SVDS, YGWT…NASF, DKQS…DPNV, RLMT…EVNT, NGYT…NKML, and DGKM…PLEG. Positions 272-334 constitute an SAM domain; it reads SYTAFGDLEV…KILAALKELQ (63 aa).

As to quaternary structure, interacts with DDX4, PIWIL1, RANBP9 and TDRD1.

Its subcellular location is the cytoplasm. Plays a central role during spermatogenesis by repressing transposable elements and preventing their mobilization, which is essential for the germline integrity. Acts via the piRNA metabolic process, which mediates the repression of transposable elements during meiosis by forming complexes composed of piRNAs and Piwi proteins and governs the methylation and subsequent repression of transposons. Its association with pi-bodies suggests a participation in the primary piRNAs metabolic process. Required prior to the pachytene stage to facilitate the production of multiple types of piRNAs, including those associated with repeats involved in the regulation of retrotransposons. May act by mediating protein-protein interactions during germ cell maturation. The protein is Ankyrin repeat, SAM and basic leucine zipper domain-containing protein 1 (ASZ1) of Pongo abelii (Sumatran orangutan).